The sequence spans 337 residues: DNA-directed RNA polymerase subunit alpha (337 aa).

The tract at residues 1–233 (MVREDVVGST…DLLIPFLHAE (233 aa)) is alpha N-terminal domain (alpha-NTD). The tract at residues 265–337 (KGIPLTCIFI…FAINLLNKKL (73 aa)) is alpha C-terminal domain (alpha-CTD).

Belongs to the RNA polymerase alpha chain family. In terms of assembly, in plastids the minimal PEP RNA polymerase catalytic core is composed of four subunits: alpha, beta, beta', and beta''. When a (nuclear-encoded) sigma factor is associated with the core the holoenzyme is formed, which can initiate transcription.

It is found in the plastid. The protein resides in the chloroplast. It catalyses the reaction RNA(n) + a ribonucleoside 5'-triphosphate = RNA(n+1) + diphosphate. Functionally, DNA-dependent RNA polymerase catalyzes the transcription of DNA into RNA using the four ribonucleoside triphosphates as substrates. The polypeptide is DNA-directed RNA polymerase subunit alpha (Phalaenopsis aphrodite subsp. formosana (Moth orchid)).